The chain runs to 300 residues: Probable alpha-L-glutamate ligase (300 aa).

An ATP-grasp domain is found at 104 to 287 (LQLLARQGID…IASRMIAWIE (184 aa)). Residues Lys141, 178 to 179 (EY), Asp187, and 211 to 213 (RSN) each bind ATP. The Mg(2+) site is built by Asp248, Glu260, and Asn262. Mn(2+)-binding residues include Asp248, Glu260, and Asn262.

It belongs to the RimK family. Mg(2+) serves as cofactor. Mn(2+) is required as a cofactor.

In Klebsiella pneumoniae (strain 342), this protein is Probable alpha-L-glutamate ligase.